Here is a 320-residue protein sequence, read N- to C-terminus: Serpentine receptor class gamma-15 (320 aa).

Helical transmembrane passes span 29–49 (TISYLIPGGILHLFILHTILV), 57–77 (GSSFFAIFALDSVSSIIIVFI), 85–105 (FLYVPPLCPIVGPFFWASSLI), 151–171 (VSLVIICILPLGGTWNIIISP), 197–217 (LFQSIYILTALVFTFICTSVT), 240–260 (IYISLTFLAAAASQALYAFCT), and 268–288 (LFTAQFLAFDMFTVGSAVILF).

The protein belongs to the nematode receptor-like protein srg family.

It localises to the membrane. This Caenorhabditis elegans protein is Serpentine receptor class gamma-15 (srg-15).